Consider the following 485-residue polypeptide: MDPAVLMEAIVEEVNCPICMTFLREPVSISCGHTFCHSCLSGLWKLPGESQNLSYTCPLCRAPVKPRKLRPNWQLASVVDKVRLLGFCMEMGLKTDVCDLHKEQLTMFCKEDDMVTCEACKQSPEHEAHSVVPIKDVAWEYKWKLQQALEHLRKEQEEAWKLEVSEKEQAAIWKTQMERRKQSIRWEFEKYRQLLKEKELPCQQAEEEAAAAQASLEQEKGETASKLELRREAIIRQSQVLWSMIVELEERSQRPVRWMLQGIQEALNRSESWTLQQLEPISLELKTDCRVLGLRETLKTFAVDVRLDPDTAYSRLVVSKDRKSVHYGVTQQNLPDNPERFYRYNIVLGSQCISSGRHYWEVEVGDRSEWGLGVCVENVDRKEVVYLSPRYGFWVIRLRKGTEYRAGTDEYPLLPLTVPPHRVGIFLDYEAHDISFYNVTDGASHIFTFPCYPFPGRLLPYFSPCYSIDTNNTTPLTICTLGGEG.

The RING-type zinc-finger motif lies at 16–61 (CPICMTFLREPVSISCGHTFCHSCLSGLWKLPGESQNLSYTCPLCR). A B box-type zinc finger spans residues 93–134 (LKTDVCDLHKEQLTMFCKEDDMVTCEACKQSPEHEAHSVVPI). Residues Cys98, His101, Cys120, and His126 each coordinate Zn(2+). Residues 144 to 226 (KLQQALEHLR…EQEKGETASK (83 aa)) are a coiled coil. In terms of domain architecture, B30.2/SPRY spans 285–483 (LKTDCRVLGL…TPLTICTLGG (199 aa)).

Belongs to the TRIM/RBCC family. As to quaternary structure, interacts with AR/androgen receptor (via ligand-binding domain). Interacts with KAT5/TIP60. In terms of processing, auto-ubiquitinated.

It is found in the cytoplasm. It localises to the perinuclear region. The protein resides in the nucleus. The enzyme catalyses S-ubiquitinyl-[E2 ubiquitin-conjugating enzyme]-L-cysteine + [acceptor protein]-L-lysine = [E2 ubiquitin-conjugating enzyme]-L-cysteine + N(6)-ubiquitinyl-[acceptor protein]-L-lysine.. It functions in the pathway protein modification; protein ubiquitination. Its function is as follows. Functions as a ubiquitin E3 ligase. Acts as a coactivator of androgen receptor (AR) depending on its ubiquitin ligase activity. This is E3 ubiquitin-protein ligase TRIM68 (Trim68) from Mus musculus (Mouse).